Consider the following 311-residue polypeptide: Methionyl-tRNA formyltransferase (311 aa).

110 to 113 contacts (6S)-5,6,7,8-tetrahydrofolate; sequence SLLP.

This sequence belongs to the Fmt family.

The catalysed reaction is L-methionyl-tRNA(fMet) + (6R)-10-formyltetrahydrofolate = N-formyl-L-methionyl-tRNA(fMet) + (6S)-5,6,7,8-tetrahydrofolate + H(+). Attaches a formyl group to the free amino group of methionyl-tRNA(fMet). The formyl group appears to play a dual role in the initiator identity of N-formylmethionyl-tRNA by promoting its recognition by IF2 and preventing the misappropriation of this tRNA by the elongation apparatus. This is Methionyl-tRNA formyltransferase from Streptococcus pneumoniae (strain Taiwan19F-14).